The following is a 256-amino-acid chain: MKRLNKLVLGIIFLFLVISITAGCGIGKEAKIKKSFEKTLSMYPIKNLEDLYEKRRLFVMTKFDKNDKGTWIIGSEMATQNKGEALKVKGMVLYMNRNTKTTKGYYYVNAIKNDKDGRPQENEKRYPVKMVDNKIIPTKEIKDKNIKKEIENFKFFVQYGNFKDLSKYKDGDISYNPEVPSYSAKYQLTNDDYNVKQLRKRYDIPTNKAPKLLLKGTGNLKGSSVGYKDIEFTFVEKKEENIYFSDGLIFKPSEDK.

The signal sequence occupies residues 1–23; that stretch reads MKRLNKLVLGIIFLFLVISITAG. A lipid anchor (N-palmitoyl cysteine) is attached at Cys24. Residue Cys24 is the site of S-diacylglycerol cysteine attachment.

The protein belongs to the staphylococcal tandem lipoprotein family.

It localises to the cell membrane. This is an uncharacterized protein from Staphylococcus aureus (strain COL).